The following is a 505-amino-acid chain: uncharacterized protein (505 aa).

Catalysis depends on H431, which acts as the Proton acceptor.

Belongs to the GMC oxidoreductase family. The cofactor is FAD.

This is an uncharacterized protein from Sinorhizobium fredii (strain NBRC 101917 / NGR234).